Here is a 353-residue protein sequence, read N- to C-terminus: Photosystem II protein D1 (353 aa).

Thr-2 carries the N-acetylthreonine modification. Thr-2 is subject to Phosphothreonine. A run of 3 helical transmembrane segments spans residues 29-46, 118-133, and 142-156; these read YIGW…TATS, HFLL…EWEL, and WIAV…AATA. His-118 contacts chlorophyll a. Tyr-126 contacts pheophytin a. Residues Asp-170 and Glu-189 each coordinate [CaMn4O5] cluster. The chain crosses the membrane as a helical span at residues 197–218; it reads FHMLGVAGVFGGSLFSAMHGSL. Chlorophyll a is bound at residue His-198. A quinone contacts are provided by residues His-215 and 264 to 265; that span reads SF. His-215 provides a ligand contact to Fe cation. Residue His-272 coordinates Fe cation. A helical membrane pass occupies residues 274-288; it reads FLAAWPVVGIWFTAL. Positions 332, 333, 342, and 344 each coordinate [CaMn4O5] cluster. A propeptide spanning residues 345 to 353 is cleaved from the precursor; it reads ALEVPYLNG.

Belongs to the reaction center PufL/M/PsbA/D family. In terms of assembly, PSII is composed of 1 copy each of membrane proteins PsbA, PsbB, PsbC, PsbD, PsbE, PsbF, PsbH, PsbI, PsbJ, PsbK, PsbL, PsbM, PsbT, PsbX, PsbY, PsbZ, Psb30/Ycf12, at least 3 peripheral proteins of the oxygen-evolving complex and a large number of cofactors. It forms dimeric complexes. Requires The D1/D2 heterodimer binds P680, chlorophylls that are the primary electron donor of PSII, and subsequent electron acceptors. It shares a non-heme iron and each subunit binds pheophytin, quinone, additional chlorophylls, carotenoids and lipids. D1 provides most of the ligands for the Mn4-Ca-O5 cluster of the oxygen-evolving complex (OEC). There is also a Cl(-1) ion associated with D1 and D2, which is required for oxygen evolution. The PSII complex binds additional chlorophylls, carotenoids and specific lipids. as cofactor. In terms of processing, phosphorylated in both bundle sheath and mesophyll cells, phosphorylation increases when cells are grown under high rather than low light regimes (70 vs 900 umol photons/m-2/s). Post-translationally, PSII is subject to light-induced damage, in particular to D1. Damaged protein is degraded by Deg1 and FtsH proteases and replaced. In maize mesophyll cells D1 degradation is less extensive in grana (stacked) vs stroma (unstacked) lamellae, in part due to exclusion of FtsH from the grana. D1 degradation is faster in bundle sheath cells. Tyr-161 forms a radical intermediate that is referred to as redox-active TyrZ, YZ or Y-Z. In terms of processing, C-terminally processed by CTPA; processing is essential to allow assembly of the oxygen-evolving complex and thus photosynthetic growth.

The protein localises to the plastid. It localises to the chloroplast thylakoid membrane. It catalyses the reaction 2 a plastoquinone + 4 hnu + 2 H2O = 2 a plastoquinol + O2. In terms of biological role, photosystem II (PSII) is a light-driven water:plastoquinone oxidoreductase that uses light energy to abstract electrons from H(2)O, generating O(2) and a proton gradient subsequently used for ATP formation. It consists of a core antenna complex that captures photons, and an electron transfer chain that converts photonic excitation into a charge separation. The D1/D2 (PsbA/PsbD) reaction center heterodimer binds P680, the primary electron donor of PSII as well as several subsequent electron acceptors. The sequence is that of Photosystem II protein D1 from Zea mays (Maize).